We begin with the raw amino-acid sequence, 458 residues long: Flavonol 3-O-glucosyltransferase UGT76E12 (458 aa).

Histidine 25 functions as the Proton acceptor in the catalytic mechanism. Histidine 25 provides a ligand contact to an anthocyanidin. The Charge relay role is filled by aspartate 118. UDP-alpha-D-glucose-binding residues include threonine 140, alanine 339, glutamine 341, histidine 356, tryptophan 359, asparagine 360, serine 361, and glutamate 364. An anthocyanidin is bound at residue glycine 379. Residues aspartate 380 and glutamine 381 each contribute to the UDP-alpha-D-glucose site.

Belongs to the UDP-glycosyltransferase family.

The enzyme catalyses a flavonol + UDP-alpha-D-glucose = a flavonol 3-O-beta-D-glucoside + UDP + H(+). It carries out the reaction a 7-O-hydroxy-flavonol + UDP-alpha-D-glucose = a flavonol 7-O-beta-D-glucoside + UDP + H(+). Its function is as follows. Possesses quercetin 3-O-glucosyltransferase and 7-O-glucosyltransferase activities in vitro. In Arabidopsis thaliana (Mouse-ear cress), this protein is Flavonol 3-O-glucosyltransferase UGT76E12.